Reading from the N-terminus, the 212-residue chain is MFTIALPKGALLEDSISIFKRAGLDFSDALEENNRSLTFESNCKRAKALLVRNGDVPVYVSYGQADLGIVGYDVLRESELKVAKLLDLGFGGCHMSLAVKKNSNYSKPTDLPANCKVASKFTKTARSYFDELNIPVEIVHLTGSVELGPITGMAEAIVDLVATGKTLQENGLIKIDDIFYSTARLIGNPLSIRLDDNHLRDTILSIESINAL.

It belongs to the ATP phosphoribosyltransferase family. Short subfamily. Heteromultimer composed of HisG and HisZ subunits.

Its subcellular location is the cytoplasm. The catalysed reaction is 1-(5-phospho-beta-D-ribosyl)-ATP + diphosphate = 5-phospho-alpha-D-ribose 1-diphosphate + ATP. Its pathway is amino-acid biosynthesis; L-histidine biosynthesis; L-histidine from 5-phospho-alpha-D-ribose 1-diphosphate: step 1/9. Functionally, catalyzes the condensation of ATP and 5-phosphoribose 1-diphosphate to form N'-(5'-phosphoribosyl)-ATP (PR-ATP). Has a crucial role in the pathway because the rate of histidine biosynthesis seems to be controlled primarily by regulation of HisG enzymatic activity. In Prochlorococcus marinus (strain MIT 9312), this protein is ATP phosphoribosyltransferase.